Reading from the N-terminus, the 359-residue chain is Guanine nucleotide-binding protein G(q) subunit alpha (359 aa).

S-palmitoyl cysteine attachment occurs at residues cysteine 9 and cysteine 10. The G-alpha domain maps to arginine 38–valine 359. Residues lysine 41 to threonine 54 form a G1 motif region. GTP contacts are provided by serine 50, glycine 51, lysine 52, serine 53, threonine 54, serine 156, leucine 180, arginine 181, and arginine 183. Serine 53 contacts Mg(2+). The G2 motif stretch occupies residues aspartate 178–threonine 186. Threonine 186 contributes to the Mg(2+) binding site. Positions phenylalanine 201–arginine 210 are G3 motif. Glutamine 209 is modified (5-glutamyl histamine). The tract at residues isoleucine 270–aspartate 277 is G4 motif. Asparagine 274, lysine 275, aspartate 277, and alanine 331 together coordinate GTP. The G5 motif stretch occupies residues threonine 329–threonine 334.

Belongs to the G-alpha family. G(q) subfamily. In terms of assembly, g proteins are composed of 3 units; alpha, beta and gamma. The alpha chain contains the guanine nucleotide binding site. Interacts (GDP-bound form) with RIC8A (via C-terminus); promoting GNAQ folding and association with the plasma membrane. Binds NHERF1. Forms a complex with PECAM1 and BDKRB2. Interacts with GAS2L2. In terms of processing, palmitoylated by ZDHHC3 and ZDHHC7. Palmitoylation occurs in the Golgi and participates in the localization of GNAQ to the plasma membrane. Histaminylated at Gln-209 residues by TGM2.

It is found in the cell membrane. The protein resides in the golgi apparatus. Its subcellular location is the nucleus. The protein localises to the nucleus membrane. The catalysed reaction is GTP + H2O = GDP + phosphate + H(+). In terms of biological role, guanine nucleotide-binding proteins (G proteins) function as transducers downstream of G protein-coupled receptors (GPCRs) in numerous signaling cascades. The alpha chain contains the guanine nucleotide binding site and alternates between an active, GTP-bound state and an inactive, GDP-bound state. Signaling by an activated GPCR promotes GDP release and GTP binding. The alpha subunit has a low GTPase activity that converts bound GTP to GDP, thereby terminating the signal. Both GDP release and GTP hydrolysis are modulated by numerous regulatory proteins. Signaling is mediated via phospholipase C-beta-dependent inositol lipid hydrolysis for signal propagation: activates phospholipase C-beta: following GPCR activation, GNAQ activates PLC-beta (PLCB1, PLCB2, PLCB3 or PLCB4), leading to production of diacylglycerol (DAG) and inositol 1,4,5-trisphosphate (IP3). Required for platelet activation. Regulates B-cell selection and survival and is required to prevent B-cell-dependent autoimmunity. Regulates chemotaxis of BM-derived neutrophils and dendritic cells (in vitro). Transduces FFAR4 signaling in response to long-chain fatty acids (LCFAs). Together with GNA11, required for heart development. This Mus musculus (Mouse) protein is Guanine nucleotide-binding protein G(q) subunit alpha (Gnaq).